Consider the following 143-residue polypeptide: Transcriptional regulator MraZ (143 aa).

2 SpoVT-AbrB domains span residues 5–47 (EYHH…PIEE) and 76–119 (AMES…SAER).

This sequence belongs to the MraZ family. In terms of assembly, forms oligomers.

Its subcellular location is the cytoplasm. The protein localises to the nucleoid. This is Transcriptional regulator MraZ from Lactobacillus johnsonii (strain CNCM I-12250 / La1 / NCC 533).